The chain runs to 463 residues: Siroheme synthase (463 aa).

The tract at residues 1–203 (MDYLPLFHKL…GQGAEAERLL (203 aa)) is precorrin-2 dehydrogenase /sirohydrochlorin ferrochelatase. Residues 22–23 (EI) and 43–44 (PE) contribute to the NAD(+) site. S128 carries the post-translational modification Phosphoserine. The uroporphyrinogen-III C-methyltransferase stretch occupies residues 216 to 463 (GEVYLVGAGP…LAWFEGAQNS (248 aa)). S-adenosyl-L-methionine is bound at residue P225. Residue D248 is the Proton acceptor of the active site. Residue K270 is the Proton donor of the active site. S-adenosyl-L-methionine contacts are provided by residues 301–303 (GGD), I306, 331–332 (TA), M383, and G412.

It in the N-terminal section; belongs to the precorrin-2 dehydrogenase / sirohydrochlorin ferrochelatase family. The protein in the C-terminal section; belongs to the precorrin methyltransferase family.

The enzyme catalyses uroporphyrinogen III + 2 S-adenosyl-L-methionine = precorrin-2 + 2 S-adenosyl-L-homocysteine + H(+). It carries out the reaction precorrin-2 + NAD(+) = sirohydrochlorin + NADH + 2 H(+). It catalyses the reaction siroheme + 2 H(+) = sirohydrochlorin + Fe(2+). It functions in the pathway cofactor biosynthesis; adenosylcobalamin biosynthesis; precorrin-2 from uroporphyrinogen III: step 1/1. Its pathway is cofactor biosynthesis; adenosylcobalamin biosynthesis; sirohydrochlorin from precorrin-2: step 1/1. The protein operates within porphyrin-containing compound metabolism; siroheme biosynthesis; precorrin-2 from uroporphyrinogen III: step 1/1. It participates in porphyrin-containing compound metabolism; siroheme biosynthesis; siroheme from sirohydrochlorin: step 1/1. It functions in the pathway porphyrin-containing compound metabolism; siroheme biosynthesis; sirohydrochlorin from precorrin-2: step 1/1. Its function is as follows. Multifunctional enzyme that catalyzes the SAM-dependent methylations of uroporphyrinogen III at position C-2 and C-7 to form precorrin-2 via precorrin-1. Then it catalyzes the NAD-dependent ring dehydrogenation of precorrin-2 to yield sirohydrochlorin. Finally, it catalyzes the ferrochelation of sirohydrochlorin to yield siroheme. This is Siroheme synthase from Pseudomonas entomophila (strain L48).